The chain runs to 213 residues: Large ribosomal subunit protein uL1 (213 aa).

The protein belongs to the universal ribosomal protein uL1 family. As to quaternary structure, part of the 50S ribosomal subunit.

Its function is as follows. Binds directly to 23S rRNA. Probably involved in E site tRNA release. Functionally, protein L1 is also a translational repressor protein, it controls the translation of its operon by binding to its mRNA. In Methanosarcina barkeri (strain Fusaro / DSM 804), this protein is Large ribosomal subunit protein uL1.